Reading from the N-terminus, the 775-residue chain is Coiled-coil domain-containing protein 33 (775 aa).

Disordered regions lie at residues 1-23 (MGRQ…LDPY) and 68-87 (EANN…PTRA). The span at 7 to 18 (KVPEEPQDRLDT) shows a compositional bias: basic and acidic residues. A C2 domain is found at 12 to 141 (PQDRLDTSLD…RAFHPYHFEL (130 aa)). A compositionally biased stretch (polar residues) spans 71-84 (NHSPQARTSVTSEP). Coiled coils occupy residues 414 to 561 (VEMN…ERKE) and 672 to 715 (DKFS…LQEQ). The tract at residues 735-775 (RSQGSTTPRQNLKDEGYPGNIERPLQTHLTPGTRDIRHHLR) is disordered.

The chain is Coiled-coil domain-containing protein 33 (Ccdc33) from Rattus norvegicus (Rat).